The primary structure comprises 110 residues: Keratin, type II cytoskeletal 8 (110 aa).

Residues 1–12 (MSTSGPRAFSSR) form a head region. The IF rod domain occupies 1–110 (MSTSGPRAFS…LDIEIATYRK (110 aa)). Phosphoserine is present on residues Ser-2, Ser-4, Ser-10, and Ser-11. Arg-12 is subject to Omega-N-methylarginine. The coil 1A stretch occupies residues 13–25 (FASFIDKVRWSLL). Residues 26 to 39 (QQQKSNMDNMFESY) are linker 1. Residue Lys-29 forms a Glycyl lysine isopeptide (Lys-Gly) (interchain with G-Cter in SUMO2) linkage. The interval 40–79 (INNLRDVDEAYMNKVELESRLEGLTDEINFLRQIHEEEIR) is coil 1B. Lys-53 is modified (N6-acetyllysine). Residues Ser-80 and Ser-85 each carry the phosphoserine modification. Positions 80 to 86 (SLDMDSI) are linker 12. The tract at residues 87-110 (IAEVRHGDDLRRLALDIEIATYRK) is coil 2. Residues 88 to 99 (AEVRHGDDLRRL) are necessary for interaction with PNN. Lys-110 is covalently cross-linked (Glycyl lysine isopeptide (Lys-Gly) (interchain with G-Cter in SUMO2)).

Belongs to the intermediate filament family. As to quaternary structure, heterotetramer of two type I and two type II keratins. Forms a heterodimer with KRT18. Associates with KRT20. Interacts with PNN. When associated with KRT19, interacts with DMD. Interacts with TCHP. Interacts with APEX1. Interacts with GPER1. Interacts with EPPK1. Interacts with PKP1 and PKP2. Post-translationally, O-glycosylated. O-GlcNAcylation at multiple sites increases solubility, and decreases stability by inducing proteasomal degradation. O-glycosylated (O-GlcNAcylated), in a cell cycle-dependent manner.

It localises to the cytoplasm. The protein localises to the nucleus. Its subcellular location is the nucleoplasm. The protein resides in the nucleus matrix. Functionally, together with KRT19, helps to link the contractile apparatus to dystrophin at the costameres of striated muscle. This chain is Keratin, type II cytoskeletal 8, found in Mesocricetus auratus (Golden hamster).